A 218-amino-acid chain; its full sequence is Thiopurine S-methyltransferase (218 aa).

S-adenosyl-L-methionine-binding residues include W10, L45, E66, and R123.

The protein belongs to the class I-like SAM-binding methyltransferase superfamily. TPMT family.

Its subcellular location is the cytoplasm. It carries out the reaction S-adenosyl-L-methionine + a thiopurine = S-adenosyl-L-homocysteine + a thiopurine S-methylether.. The chain is Thiopurine S-methyltransferase from Shewanella denitrificans (strain OS217 / ATCC BAA-1090 / DSM 15013).